The chain runs to 509 residues: Meiotically up-regulated gene 157 protein (509 aa).

Helical transmembrane passes span 4 to 24 (WQAI…NIPW), 140 to 160 (LATL…QFPY), 296 to 316 (ACVL…LSHL), 368 to 388 (ILFM…LGFV), and 417 to 437 (ISGI…SLIV).

It localises to the endoplasmic reticulum membrane. Functionally, has a role in meiosis. In Schizosaccharomyces pombe (strain 972 / ATCC 24843) (Fission yeast), this protein is Meiotically up-regulated gene 157 protein (mug157).